A 254-amino-acid polypeptide reads, in one-letter code: MLRFIAVFALVNCALAGTLPNDLDGRIVNGVDTTIEAHPYQVPLQNAALSHFCGGSIISEDLVVTAAHCMQSYTASQIKVRLGSTIYNEGGELVSVKAFKFHEGYNPKTMVNDVALIKLATPVRESSKIRYIRLADRTPPTGTPAVVTGWGTKCFLTCVSLPKTLQEVEVDIVDQKACASNEFKYGSQIQDTMVCAYALKKDACQGDSGGPLVANNQLVGIVSWGSGCARVGYPGVFCDVPSVRSWIEKTAKEL.

The first 16 residues, Met-1–Ala-16, serve as a signal peptide directing secretion. Positions Gly-17–Arg-26 are cleaved as a propeptide — activation peptide. The Peptidase S1 domain occupies Ile-27–Lys-252. Cys-53 and Cys-69 are disulfide-bonded. Residues His-68 and Asp-113 each act as charge relay system in the active site. 3 disulfide bridges follow: Cys-154/Cys-158, Cys-178/Cys-195, and Cys-204/Cys-228. Ser-208 acts as the Charge relay system in catalysis.

It belongs to the peptidase S1 family.

It localises to the secreted. Its subcellular location is the extracellular space. It catalyses the reaction Preferential cleavage: Arg-|-Xaa, Lys-|-Xaa.. Involved in digestion of a protein meal. The protein is Trypsin of Sarcophaga bullata (Grey flesh fly).